A 156-amino-acid polypeptide reads, in one-letter code: Small ribosomal subunit protein uS7 (156 aa).

Belongs to the universal ribosomal protein uS7 family. In terms of assembly, part of the 30S ribosomal subunit. Contacts proteins S9 and S11.

Its function is as follows. One of the primary rRNA binding proteins, it binds directly to 16S rRNA where it nucleates assembly of the head domain of the 30S subunit. Is located at the subunit interface close to the decoding center, probably blocks exit of the E-site tRNA. This is Small ribosomal subunit protein uS7 from Mycobacterium leprae (strain TN).